Consider the following 388-residue polypeptide: Succinate--CoA ligase [ADP-forming] subunit beta (388 aa).

The ATP-grasp domain occupies 9 to 244; sequence KEILRKFGVA…LDEEDPAEIE (236 aa). Residues Lys-46, 53–55, Glu-99, Ala-102, and Glu-107 contribute to the ATP site; that span reads GRG. Residues Asn-199 and Asp-213 each coordinate Mg(2+). Substrate-binding positions include Asn-264 and 321-323; that span reads GIM.

This sequence belongs to the succinate/malate CoA ligase beta subunit family. As to quaternary structure, heterotetramer of two alpha and two beta subunits. It depends on Mg(2+) as a cofactor.

The catalysed reaction is succinate + ATP + CoA = succinyl-CoA + ADP + phosphate. It catalyses the reaction GTP + succinate + CoA = succinyl-CoA + GDP + phosphate. It functions in the pathway carbohydrate metabolism; tricarboxylic acid cycle; succinate from succinyl-CoA (ligase route): step 1/1. Succinyl-CoA synthetase functions in the citric acid cycle (TCA), coupling the hydrolysis of succinyl-CoA to the synthesis of either ATP or GTP and thus represents the only step of substrate-level phosphorylation in the TCA. The beta subunit provides nucleotide specificity of the enzyme and binds the substrate succinate, while the binding sites for coenzyme A and phosphate are found in the alpha subunit. The chain is Succinate--CoA ligase [ADP-forming] subunit beta from Burkholderia thailandensis (strain ATCC 700388 / DSM 13276 / CCUG 48851 / CIP 106301 / E264).